Consider the following 65-residue polypeptide: Toxin KTx8 (65 aa).

Positions Met-1–Gly-25 are cleaved as a signal peptide. 3 disulfides stabilise this stretch: Cys-31–Cys-53, Cys-38–Cys-61, and Cys-42–Cys-63.

Belongs to the short scorpion toxin superfamily. Potassium channel inhibitor family. Alpha-KTx 11 subfamily. As to expression, expressed by the venom gland.

It localises to the secreted. Functionally, this recombinant toxin inhibits the mammalian voltage-gated potassium channels Kv1.3/KCNA3 in vitro with an IC(50) of 26.40 nM. In Lychas mucronatus (Chinese swimming scorpion), this protein is Toxin KTx8.